The following is a 425-amino-acid chain: Serine--tRNA ligase (425 aa).

230 to 232 is a binding site for L-serine; that stretch reads TAE. ATP is bound at residue 261-263; it reads RSE. E284 contributes to the L-serine binding site. 348-351 contributes to the ATP binding site; sequence EISS. S384 is an L-serine binding site.

The protein belongs to the class-II aminoacyl-tRNA synthetase family. Type-1 seryl-tRNA synthetase subfamily. In terms of assembly, homodimer. The tRNA molecule binds across the dimer.

It localises to the cytoplasm. It carries out the reaction tRNA(Ser) + L-serine + ATP = L-seryl-tRNA(Ser) + AMP + diphosphate + H(+). The catalysed reaction is tRNA(Sec) + L-serine + ATP = L-seryl-tRNA(Sec) + AMP + diphosphate + H(+). It participates in aminoacyl-tRNA biosynthesis; selenocysteinyl-tRNA(Sec) biosynthesis; L-seryl-tRNA(Sec) from L-serine and tRNA(Sec): step 1/1. In terms of biological role, catalyzes the attachment of serine to tRNA(Ser). Is also able to aminoacylate tRNA(Sec) with serine, to form the misacylated tRNA L-seryl-tRNA(Sec), which will be further converted into selenocysteinyl-tRNA(Sec). The sequence is that of Serine--tRNA ligase from Streptococcus equi subsp. zooepidemicus (strain MGCS10565).